A 156-amino-acid chain; its full sequence is Large ribosomal subunit protein uL30 (156 aa).

This sequence belongs to the universal ribosomal protein uL30 family. In terms of assembly, part of the 50S ribosomal subunit.

This Sulfolobus acidocaldarius (strain ATCC 33909 / DSM 639 / JCM 8929 / NBRC 15157 / NCIMB 11770) protein is Large ribosomal subunit protein uL30.